Consider the following 239-residue polypeptide: Orotidine 5'-phosphate decarboxylase (239 aa).

Residues D15, K36, 63 to 72, T127, R189, Q198, G218, and R219 each bind substrate; that span reads DLKFHDIPNT. The Proton donor role is filled by K65.

This sequence belongs to the OMP decarboxylase family. Type 1 subfamily. In terms of assembly, homodimer.

The catalysed reaction is orotidine 5'-phosphate + H(+) = UMP + CO2. It functions in the pathway pyrimidine metabolism; UMP biosynthesis via de novo pathway; UMP from orotate: step 2/2. In terms of biological role, catalyzes the decarboxylation of orotidine 5'-monophosphate (OMP) to uridine 5'-monophosphate (UMP). In Prochlorococcus marinus (strain MIT 9515), this protein is Orotidine 5'-phosphate decarboxylase.